A 147-amino-acid chain; its full sequence is Small ribosomal subunit protein uS12 (147 aa).

This sequence belongs to the universal ribosomal protein uS12 family. In terms of assembly, part of the 30S ribosomal subunit.

Its function is as follows. With S4 and S5 plays an important role in translational accuracy. Located at the interface of the 30S and 50S subunits. The polypeptide is Small ribosomal subunit protein uS12 (Methanococcus maripaludis (strain DSM 14266 / JCM 13030 / NBRC 101832 / S2 / LL)).